The chain runs to 148 residues: Suppressor APC domain-containing protein 1 (148 aa).

A disordered region spans residues 120 to 148 (SRQQKGVTQPKEEMAQRGCTKGPRGPTRV).

The polypeptide is Suppressor APC domain-containing protein 1 (SAPCD1) (Homo sapiens (Human)).